A 322-amino-acid chain; its full sequence is Olfactory receptor 1J1 (322 aa).

The Extracellular portion of the chain corresponds to 1 to 25 (MSPENQSSVSEFLLLGLPIRPEQQA). N-linked (GlcNAc...) asparagine glycosylation is present at Asn5. A helical transmembrane segment spans residues 26–49 (VFFALFLGMYLTTVLGNLLIMLLI). Over 50-57 (QLDSHLHT) the chain is Cytoplasmic. The helical transmembrane segment at 58–79 (PMYFFLSHLALTDISFSSVTVP) threads the bilayer. Residues 80–100 (KMLMNMQTQHLAVFYKGCISQ) lie on the Extracellular side of the membrane. Cys97 and Cys189 are oxidised to a cystine. A helical membrane pass occupies residues 101 to 120 (TYFFIFFADLDSFLITSMAY). Residues 121 to 139 (DRYVAICHPLHYATIMTQS) lie on the Cytoplasmic side of the membrane. Residues 140–158 (QCVMLVAGSWVIACACALL) form a helical membrane-spanning segment. Topologically, residues 159-196 (HTLLLAQLSFCADHIIPHYFCDLGALLKLSCSDTSLNQ) are extracellular. The helical transmembrane segment at 197–219 (LAIFTAALTAIMLPFLCILVSYG) threads the bilayer. The Cytoplasmic portion of the chain corresponds to 220–236 (HIGVTILQIPSTKGICK). Residues 237–259 (ALSTCGSHLSVVTIYYRTIIGLY) form a helical membrane-spanning segment. The Extracellular portion of the chain corresponds to 260–272 (FLPPSSNTNDKNI). Residues 273–292 (IASVIYTAVTPMLNPFIYSL) form a helical membrane-spanning segment. Residues 293–322 (RNKDIKGALRKLLSRSGAVAHACNLNTLGG) are Cytoplasmic-facing.

The protein belongs to the G-protein coupled receptor 1 family.

The protein resides in the cell membrane. In terms of biological role, odorant receptor. This chain is Olfactory receptor 1J1, found in Homo sapiens (Human).